Consider the following 758-residue polypeptide: 5-methyltetrahydropteroyltriglutamate--homocysteine methyltransferase (758 aa).

5-methyltetrahydropteroyltri-L-glutamate is bound by residues 17-20 (RELK) and lysine 117. L-homocysteine is bound by residues 434–436 (IGS) and glutamate 487. L-methionine is bound by residues 434–436 (IGS) and glutamate 487. 5-methyltetrahydropteroyltri-L-glutamate-binding positions include 518–519 (RC) and tryptophan 564. Aspartate 602 contributes to the L-homocysteine binding site. Aspartate 602 contributes to the L-methionine binding site. Residue glutamate 608 participates in 5-methyltetrahydropteroyltri-L-glutamate binding. Histidine 644, cysteine 646, and glutamate 668 together coordinate Zn(2+). The active-site Proton donor is the histidine 697. Cysteine 729 is a Zn(2+) binding site.

Belongs to the vitamin-B12 independent methionine synthase family. The cofactor is Zn(2+).

The catalysed reaction is 5-methyltetrahydropteroyltri-L-glutamate + L-homocysteine = tetrahydropteroyltri-L-glutamate + L-methionine. Its pathway is amino-acid biosynthesis; L-methionine biosynthesis via de novo pathway; L-methionine from L-homocysteine (MetE route): step 1/1. Its function is as follows. Catalyzes the transfer of a methyl group from 5-methyltetrahydrofolate to homocysteine resulting in methionine formation. The sequence is that of 5-methyltetrahydropteroyltriglutamate--homocysteine methyltransferase from Yersinia pseudotuberculosis serotype I (strain IP32953).